Consider the following 127-residue polypeptide: Secreted RxLR effector protein 3 (127 aa).

The N-terminal stretch at 1–20 (MRPPLLLFLTVTVLVSCASA) is a signal peptide. The RxLR-dEER signature appears at 30 to 48 (RSLRSIKTTTNDDAAEEER).

It belongs to the RxLR effector family.

Its subcellular location is the secreted. It localises to the host cell. Functionally, secreted effector that partially suppresses elicitor-induced cell death in host and enhances virulence of P.parasitica. The protein is Secreted RxLR effector protein 3 of Phytophthora nicotianae (Potato buckeye rot agent).